We begin with the raw amino-acid sequence, 315 residues long: Lipoyl synthase (315 aa).

Residues 1–33 (MADMPPVLRHPEKAHRPDQPQPKKPDWIRVKAP) are disordered. Positions 9–29 (RHPEKAHRPDQPQPKKPDWIR) are enriched in basic and acidic residues. [4Fe-4S] cluster-binding residues include C54, C59, C65, C80, C84, C87, and S294. The 218-residue stretch at 66–283 (WSQGHATMMI…EKAAYGKGFL (218 aa)) folds into the Radical SAM core domain.

The protein belongs to the radical SAM superfamily. Lipoyl synthase family. It depends on [4Fe-4S] cluster as a cofactor.

The protein localises to the cytoplasm. It catalyses the reaction [[Fe-S] cluster scaffold protein carrying a second [4Fe-4S](2+) cluster] + N(6)-octanoyl-L-lysyl-[protein] + 2 oxidized [2Fe-2S]-[ferredoxin] + 2 S-adenosyl-L-methionine + 4 H(+) = [[Fe-S] cluster scaffold protein] + N(6)-[(R)-dihydrolipoyl]-L-lysyl-[protein] + 4 Fe(3+) + 2 hydrogen sulfide + 2 5'-deoxyadenosine + 2 L-methionine + 2 reduced [2Fe-2S]-[ferredoxin]. The protein operates within protein modification; protein lipoylation via endogenous pathway; protein N(6)-(lipoyl)lysine from octanoyl-[acyl-carrier-protein]: step 2/2. In terms of biological role, catalyzes the radical-mediated insertion of two sulfur atoms into the C-6 and C-8 positions of the octanoyl moiety bound to the lipoyl domains of lipoate-dependent enzymes, thereby converting the octanoylated domains into lipoylated derivatives. The polypeptide is Lipoyl synthase (Paracoccus denitrificans (strain Pd 1222)).